The chain runs to 198 residues: Nucleoside triphosphate pyrophosphatase (198 aa).

The active-site Proton acceptor is the D75.

This sequence belongs to the Maf family. Requires a divalent metal cation as cofactor.

The protein resides in the cytoplasm. The catalysed reaction is a ribonucleoside 5'-triphosphate + H2O = a ribonucleoside 5'-phosphate + diphosphate + H(+). It catalyses the reaction a 2'-deoxyribonucleoside 5'-triphosphate + H2O = a 2'-deoxyribonucleoside 5'-phosphate + diphosphate + H(+). Functionally, nucleoside triphosphate pyrophosphatase. May have a dual role in cell division arrest and in preventing the incorporation of modified nucleotides into cellular nucleic acids. This Hyphomonas neptunium (strain ATCC 15444) protein is Nucleoside triphosphate pyrophosphatase.